The sequence spans 458 residues: Peptidyl-prolyl cis-trans isomerase FKBP4 (458 aa).

An N-acetylmethionine; in peptidyl-prolyl cis-trans isomerase FKBP4; alternate modification is found at Met1. N-acetylthreonine; in peptidyl-prolyl cis-trans isomerase FKBP4, N-terminally processed; partial is present on Thr2. In terms of domain architecture, PPIase FKBP-type 1 spans 50–138 (GDRVFVHYTG…VFEVELFEFK (89 aa)). Thr143 bears the Phosphothreonine; by CK2 mark. In terms of domain architecture, PPIase FKBP-type 2 spans 167 to 253 (GAMVEVALEG…RYEVHLKSFE (87 aa)). Residue Tyr220 is modified to Phosphotyrosine. Positions 267–400 (LEQSNIVKER…TQLAVCQQRT (134 aa)) are interaction with tubulin. 3 TPR repeats span residues 270-303 (SNIV…LEYE), 319-352 (LASH…DSNN), and 353-386 (EKGL…YPSN). Lys282 carries the post-translational modification N6-acetyllysine. Arg373 is subject to Omega-N-methylarginine. The tract at residues 423–458 (HKAKTEVAAGDHPTDAEMKGEPNNVAGNQAQVKTEA) is disordered. Thr436 is modified (phosphothreonine). Lys441 is covalently cross-linked (Glycyl lysine isopeptide (Lys-Gly) (interchain with G-Cter in SUMO1)). A compositionally biased stretch (polar residues) spans 447-458 (VAGNQAQVKTEA).

As to quaternary structure, homodimer. Interacts with GLMN. Associates with HSP90AA1 and HSP70 in steroid hormone receptor complexes. Also interacts with peroxisomal phytanoyl-CoA alpha-hydroxylase (PHYH). Interacts with NR3C1 and dynein. Interacts with HSF1 in the HSP90 complex. Associates with tubulin. Interacts with MAPT/TAU. Interacts (via TPR domain) with S100A1, S100A2 and S100A6; the interaction is Ca(2+) dependent. Interaction with S100A1 and S100A2 (but not with S100A6) leads to inhibition of FKBP4-HSP90 interaction. Interacts with dynein; causes partially NR3C1 transport to the nucleus. In terms of processing, phosphorylation by CK2 results in loss of HSP90 binding activity. Widely detected in the brain (at protein level).

The protein resides in the cytoplasm. The protein localises to the cytosol. It localises to the mitochondrion. Its subcellular location is the nucleus. It is found in the cytoskeleton. The protein resides in the cell projection. The protein localises to the axon. The enzyme catalyses [protein]-peptidylproline (omega=180) = [protein]-peptidylproline (omega=0). Inhibited by FK506. In terms of biological role, immunophilin protein with PPIase and co-chaperone activities. Component of unligated steroid receptors heterocomplexes through interaction with heat-shock protein 90 (HSP90). Plays a role in the intracellular trafficking of heterooligomeric forms of steroid hormone receptors between cytoplasm and nuclear compartments. May have a protective role against oxidative stress in mitochondria. Also acts as a regulator of microtubule dynamics by inhibiting MAPT/TAU ability to promote microtubule assembly. The PPIase activity controls neuronal growth cones via regulation of TRPC1 channel opening. The polypeptide is Peptidyl-prolyl cis-trans isomerase FKBP4 (Fkbp4) (Rattus norvegicus (Rat)).